Consider the following 502-residue polypeptide: 4,4'-diapophytoene desaturase (4,4'-diaponeurosporene-forming) (502 aa).

5 to 17 (VIGAGVTGLAAAA) lines the FAD pocket.

This sequence belongs to the carotenoid/retinoid oxidoreductase family. CrtN subfamily.

The enzyme catalyses 15-cis-4,4'-diapophytoene + 3 FAD + 3 H(+) = all-trans-4,4'-diaponeurosporene + 3 FADH2. The protein operates within carotenoid biosynthesis; staphyloxanthin biosynthesis; staphyloxanthin from farnesyl diphosphate: step 2/5. In terms of biological role, involved in the biosynthesis of the yellow-orange carotenoid staphyloxanthin, which plays a role in the virulence via its protective function against oxidative stress. Catalyzes three successive dehydrogenation reactions that lead to the introduction of three double bonds into 4,4'-diapophytoene (dehydrosqualene), with 4,4'-diapophytofluene and 4,4'-diapo-zeta-carotene as intermediates, and 4,4'-diaponeurosporene (the major deep-yellow pigment in staphylococci strains) as the end product. This chain is 4,4'-diapophytoene desaturase (4,4'-diaponeurosporene-forming), found in Staphylococcus aureus (strain MW2).